The primary structure comprises 103 residues: Large ribosomal subunit protein uL24 (103 aa).

Residues 70-103 (YLDPSTNEPTRLGVRREDGKRVRYAKKSGKDLEN) are disordered.

The protein belongs to the universal ribosomal protein uL24 family. Part of the 50S ribosomal subunit.

Its function is as follows. One of two assembly initiator proteins, it binds directly to the 5'-end of the 23S rRNA, where it nucleates assembly of the 50S subunit. Functionally, one of the proteins that surrounds the polypeptide exit tunnel on the outside of the subunit. This is Large ribosomal subunit protein uL24 from Lactiplantibacillus plantarum (strain ATCC BAA-793 / NCIMB 8826 / WCFS1) (Lactobacillus plantarum).